The sequence spans 161 residues: Endoribonuclease YbeY (161 aa).

Residues histidine 121, histidine 125, and histidine 131 each contribute to the Zn(2+) site.

It belongs to the endoribonuclease YbeY family. The cofactor is Zn(2+).

The protein resides in the cytoplasm. In terms of biological role, single strand-specific metallo-endoribonuclease involved in late-stage 70S ribosome quality control and in maturation of the 3' terminus of the 16S rRNA. The sequence is that of Endoribonuclease YbeY from Xanthomonas euvesicatoria pv. vesicatoria (strain 85-10) (Xanthomonas campestris pv. vesicatoria).